The chain runs to 728 residues: FAD-dependent monooxygenase avaB (728 aa).

Residues 17–37 (VIDLLLTFFFYSGLYGLIAAK) traverse the membrane as a helical segment. Polar residues predominate over residues 50-64 (NQQCENTDDVPQSFQ). Residues 50–72 (NQQCENTDDVPQSFQRPRDTRST) are disordered. Val168 contributes to the FAD binding site. 490–491 (DL) is a binding site for NADP(+).

It belongs to the FAD-binding monooxygenase family. FAD serves as cofactor.

The protein localises to the membrane. It participates in secondary metabolite metabolism. Multifunctional FAD-dependent monooxygenase; part of the cluster that mediates the biosynthesis of a highly modified cyclo-arginine-tryptophan dipeptide (cRW). Within the pathway, avaB uses the avaA cyclo-arginine-tryptophan dipeptide (cRW) as substrate to generate the cyclo-Arg-formylkynurenine diketopiperazine (DKP). AvaB also catalyzes an additional N-oxidation of the avaC product which is followed by cyclization and dehydration. The first step of the pathway is perfornmed by the arginine-containing cyclodipeptide synthase (RCPDS) avaA that acts as the scaffold-generating enzyme and is responsible for formation of the cyclo-Arg-Trp (cRW) diketopiperazine. AvaB then acts as a multifunctional flavoenzyme that is responsible for generating the cyclo-Arg-formylkynurenine DKP, which can be deformylated by avaC. AvaB then further catalyzes an additional N-oxidation followed by cyclization and dehydration. The next step is an N-acetylation of the guanidine group catalyzed by the arginine N-acetyltransferase avaD. The roles of the additional enzymes identified within the ava cluster still have to be determined. The sequence is that of FAD-dependent monooxygenase avaB from Aspergillus versicolor.